A 31-amino-acid chain; its full sequence is Cycloviolacin-O6 (31 aa).

Residues 1 to 31 (GTLPCGESCVWIPCISAAVGCSCKSKVCYKN) constitute a cross-link (cyclopeptide (Gly-Asn)). Cystine bridges form between cysteine 5–cysteine 21, cysteine 9–cysteine 23, and cysteine 14–cysteine 28.

Post-translationally, this is a cyclic peptide.

Probably participates in a plant defense mechanism. In Viola odorata (Sweet violet), this protein is Cycloviolacin-O6.